We begin with the raw amino-acid sequence, 95 residues long: PqqA binding protein (95 aa).

The protein belongs to the PqqD family. Monomer. Interacts with PqqE.

It participates in cofactor biosynthesis; pyrroloquinoline quinone biosynthesis. Its function is as follows. Functions as a PqqA binding protein and presents PqqA to PqqE, in the pyrroloquinoline quinone (PQQ) biosynthetic pathway. This chain is PqqA binding protein, found in Rahnella aquatilis.